The primary structure comprises 292 residues: uncharacterized protein (292 aa).

K8 is covalently cross-linked (Glycyl lysine isopeptide (Lys-Gly) (interchain with G-Cter in SUMO2)). Residues 47–67 (TKRKMLPSSSSRMRSDGFDEE) are disordered. K76 is covalently cross-linked (Glycyl lysine isopeptide (Lys-Gly) (interchain with G-Cter in SUMO2)). N94 carries the phosphothreonine modification. Phosphoserine is present on residues K96 and F97. The disordered stretch occupies residues 122-292 (ETDSDQQDIT…ERSAESSEDD (171 aa)). Position 123 is a phosphothreonine (T123). Residues S125 and D126 each carry the phosphoserine modification. A compositionally biased stretch (polar residues) spans 128–140 (QDITNGKKTSPQV). Residues 147 to 173 (SRKHKKSKKSHKKKQKKRSHKKQKKSK) show a composition bias toward basic residues. Residues 180–194 (TADSSSEFSEETGAS) are compositionally biased toward polar residues. Composition is skewed to basic residues over residues 197–215 (RKGK…KSLK) and 247–259 (KKTK…KKAH). Basic and acidic residues predominate over residues 280 to 292 (ATDERSAESSEDD).

This is an uncharacterized protein from Homo sapiens (Human).